Here is a 154-residue protein sequence, read N- to C-terminus: Peptide methionine sulfoxide reductase MsrB (154 aa).

The MsrB domain maps to 28–150 (DQQWREQLSE…NSVSLIFNKI (123 aa)). C67, C70, C116, and C119 together coordinate Zn(2+). The active-site Nucleophile is C139.

Belongs to the MsrB Met sulfoxide reductase family. Zn(2+) serves as cofactor.

It carries out the reaction L-methionyl-[protein] + [thioredoxin]-disulfide + H2O = L-methionyl-(R)-S-oxide-[protein] + [thioredoxin]-dithiol. This is Peptide methionine sulfoxide reductase MsrB from Vibrio vulnificus (strain CMCP6).